Reading from the N-terminus, the 470-residue chain is Peripherin (470 aa).

The segment at 1 to 99 is head; sequence MSHHPSGLRA…FLATRSNEKQ (99 aa). Tyr-17 bears the 3'-nitrotyrosine mark. Phosphoserine is present on residues Ser-28, Ser-50, and Ser-59. The 311-residue stretch at 97–407 folds into the IF rod domain; it reads EKQELQELND…KLLEGEESRI (311 aa). The tract at residues 100-132 is coil 1A; that stretch reads ELQELNDRFANFIEKVRFLEQQNAALRGELSQA. The interval 133–143 is linker 1; the sequence is RGQEPARADQL. The coil 1B stretch occupies residues 144-239; it reads CQQELRELRR…KLHEEELRDL (96 aa). Positions 240 to 262 are linker 2; sequence QVSVESQQVQQVEVEATVKPELT. The tract at residues 263 to 405 is coil 2; the sequence is AALRDIRAQY…YRKLLEGEES (143 aa). 3'-nitrotyrosine is present on Tyr-379. Residues 406–470 form a tail region; that stretch reads RISVPVHSFA…ELDKSSAHSY (65 aa). Positions 447 to 470 are disordered; sequence NGEVVTESQKEQRSELDKSSAHSY. Residues 454-470 are compositionally biased toward basic and acidic residues; it reads SQKEQRSELDKSSAHSY. The residue at position 470 (Tyr-470) is a Phosphotyrosine.

Belongs to the intermediate filament family. Forms homodimers (in vitro). Homopolymerizes into a filamentous network (in vitro). Forms heterodimers with NEFL, NEFM or NEFH (in vitro). Interacts with DST (via C-terminus). Interacts with RAB7A; the interaction is direct. Interacts with PRKCE (via phorbol-ester/DAG-type 2 domain). Phosphorylated; phosphorylation increases after nerve injury in regenerating neurons. In terms of tissue distribution, expressed in the neurons of the outer hair cells in the organ of Corti and to a lesser extent in type I spiral ganglion cells.

Its subcellular location is the cytoplasm. It is found in the cytoskeleton. The protein localises to the cell projection. The protein resides in the axon. It localises to the perikaryon. Functionally, class-III neuronal intermediate filament protein. May form an independent structural network without the involvement of other neurofilaments or may cooperate with the neuronal intermediate filament proteins NEFL, NEFH, NEFM and INA to form a filamentous network. Assembly of the neuronal intermediate filaments may be regulated by RAB7A. Plays a role in the development of unmyelinated sensory neurons. May be involved in axon elongation and axon regeneration after injury. Inhibits neurite extension in type II spiral ganglion neurons in the cochlea. This is Peripherin (PRPH) from Homo sapiens (Human).